A 284-amino-acid polypeptide reads, in one-letter code: MALIIDGRKVAAAIREEVKSEVDRLKERGIVPRLAVILVGEDPASVLYSRSIEKACTRAGVEYELFALPAGIPEDDVVALLSRLNEDGSVHGIMVELPLPKQMNRQKVLEAVSPVKDVDGVHPVNRGYIMSNSEGLFPTTPMSCIEIMLRNGIEIKGKHAVLVGRGESVGKPLVYMMLNQNATVTVCHTFTNDLAYHTRQADILVVAVGKAGMITGDMVKPGAVVVDAGINEAKDGGICGDVDFDSVARVAGAISPVPGGVGSLTTTLILKNTLKAIRLQGGKV.

NADP(+)-binding positions include 164–166 (GRG), Thr-189, and Ile-230.

Belongs to the tetrahydrofolate dehydrogenase/cyclohydrolase family. In terms of assembly, homodimer.

It carries out the reaction (6R)-5,10-methylene-5,6,7,8-tetrahydrofolate + NADP(+) = (6R)-5,10-methenyltetrahydrofolate + NADPH. The catalysed reaction is (6R)-5,10-methenyltetrahydrofolate + H2O = (6R)-10-formyltetrahydrofolate + H(+). The protein operates within one-carbon metabolism; tetrahydrofolate interconversion. Catalyzes the oxidation of 5,10-methylenetetrahydrofolate to 5,10-methenyltetrahydrofolate and then the hydrolysis of 5,10-methenyltetrahydrofolate to 10-formyltetrahydrofolate. The sequence is that of Bifunctional protein FolD from Pelotomaculum thermopropionicum (strain DSM 13744 / JCM 10971 / SI).